The sequence spans 184 residues: MIVAVEGIITKKEPTFCVLKTVTGVSYGISISLGCSARINKGEKIELLTAQILREDADLLYGFLDEKEKRMFEMLIKLNGIGANTAMAVCSSLSSDNFLRAIINGDTATLTTVPGIGPKTARRIIAELSDAKIELANDGEQYKIETISALENLGFKRDKINKILLNCKSTNTADLIKEALKKLA.

Residues 1 to 64 are domain I; it reads MIVAVEGIIT…EDADLLYGFL (64 aa). Residues 65-145 form a domain II region; the sequence is DEKEKRMFEM…ANDGEQYKIE (81 aa). A region of interest (flexible linker) is located at residue E145. Positions 145-184 are domain III; that stretch reads ETISALENLGFKRDKINKILLNCKSTNTADLIKEALKKLA.

Belongs to the RuvA family. Homotetramer. Forms an RuvA(8)-RuvB(12)-Holliday junction (HJ) complex. HJ DNA is sandwiched between 2 RuvA tetramers; dsDNA enters through RuvA and exits via RuvB. An RuvB hexamer assembles on each DNA strand where it exits the tetramer. Each RuvB hexamer is contacted by two RuvA subunits (via domain III) on 2 adjacent RuvB subunits; this complex drives branch migration. In the full resolvosome a probable DNA-RuvA(4)-RuvB(12)-RuvC(2) complex forms which resolves the HJ.

It is found in the cytoplasm. Its function is as follows. The RuvA-RuvB-RuvC complex processes Holliday junction (HJ) DNA during genetic recombination and DNA repair, while the RuvA-RuvB complex plays an important role in the rescue of blocked DNA replication forks via replication fork reversal (RFR). RuvA specifically binds to HJ cruciform DNA, conferring on it an open structure. The RuvB hexamer acts as an ATP-dependent pump, pulling dsDNA into and through the RuvAB complex. HJ branch migration allows RuvC to scan DNA until it finds its consensus sequence, where it cleaves and resolves the cruciform DNA. This is Holliday junction branch migration complex subunit RuvA from Campylobacter hominis (strain ATCC BAA-381 / DSM 21671 / CCUG 45161 / LMG 19568 / NCTC 13146 / CH001A).